Here is a 187-residue protein sequence, read N- to C-terminus: Decorin-binding protein B (187 aa).

Positions methionine 1 to alanine 20 are cleaved as a signal peptide.

This sequence belongs to the decorin-binding protein family.

Binds to decorin which may mediate the adherence of B.burgdorferi to collagen fibers in skin and other tissues. This is Decorin-binding protein B (dbpB) from Borreliella burgdorferi (strain ATCC 35210 / DSM 4680 / CIP 102532 / B31) (Borrelia burgdorferi).